The following is a 213-amino-acid chain: MNYTKFDVKNWVRREHFEFYRHRLPCGFSLTSKIDITTLKKSLDDSAYKFYPVMIYLIAQAVNQFDELRMAIKDDELIVWDSVDPQFTVFHQETETFSALSCPYSSDIDQFMVNYLSVMERYKSDTKLFPQGVTPENHLNISALPWVNFDSFNLNVANFTDYFAPIITMAKYQQEGDRLLLPLSVQVHHAVCDGFHVARFINRLQELCNSKLK.

His-189 (proton acceptor) is an active-site residue.

This sequence belongs to the chloramphenicol acetyltransferase family. Homotrimer.

The enzyme catalyses chloramphenicol + acetyl-CoA = chloramphenicol 3-acetate + CoA. Its function is as follows. This enzyme is an effector of chloramphenicol resistance in bacteria. This chain is Chloramphenicol acetyltransferase 3 (cat3), found in Escherichia coli.